The chain runs to 682 residues: MCGIFAYMNYRVPRTRKEIFETLIKGLQRLEYRGYDSAGVAIDGNNHEVKERHIQLVKKRGKVKALDEELYKQDSMDLKVEFETHFGIAHTRWATHGVPSAVNSHPQRSDKGNEFVVIHNGIITNYKDLRKFLESKGYEFESETDTETIAKLIKYVFDNRETEDITFSTLVERVIQQLEGAFALVFKSVHYPGEAVATRRGSPLLIGVRSKYKLSTEQIPILYRTCTLENVKNICKTRMKRLDSSACLHAVGDKAVEFFFASDASAIIEHTNRVIFLEDDDIAAVADGKLSIHRVKRSASDDPSRAIQTLQMELQQIMKGNFSAFMQKEIFEQPESVFNTMRGRVNFETNTVLLGGLKDHLKEIRRCRRLIVIGCGTSYHAAVATRQVLEELTELPVMVELASDFLDRNTPVFRDDVCFFISQSGETADTLLALRYCKDRGALTVGVTNTVGSSISRETDCGVHINAGPEIGVASTKAYTSQFISLVMFGLMMSEDRISLQNRRQEIIRGLRSLPELIKEVLSLEEKIHDLALELYTQRSLLVMGRGYNYATCLEGALKIKEITYMHSEGILAGELKHGPLALIDKQMPVIMVIMKDPCFAKCQNALQQVTARQGRPIILCSKDDTESSKFAYKTIELPHTVDCLQGILSVIPLQLLSFHLAVLRGYDVDFPRNLAKSVTVE.

The active-site For GATase activity is the Cys2. Positions 2 to 288 (CGIFAYMNYR…DDDIAAVADG (287 aa)) constitute a Glutamine amidotransferase type-2 domain. Ser244 carries the phosphoserine modification. SIS domains lie at 360 to 499 (HLKE…DRIS) and 531 to 672 (LALE…VDFP). Residues 377–378 (TS), 422–424 (SQS), Thr427, and His578 contribute to the substrate site.

As to expression, highest levels of expression in heart, placenta, and spinal cord.

The enzyme catalyses D-fructose 6-phosphate + L-glutamine = D-glucosamine 6-phosphate + L-glutamate. It participates in nucleotide-sugar biosynthesis; UDP-N-acetyl-alpha-D-glucosamine biosynthesis; alpha-D-glucosamine 6-phosphate from D-fructose 6-phosphate: step 1/1. Controls the flux of glucose into the hexosamine pathway. Most likely involved in regulating the availability of precursors for N- and O-linked glycosylation of proteins. In Homo sapiens (Human), this protein is Glutamine--fructose-6-phosphate aminotransferase [isomerizing] 2 (GFPT2).